The following is a 445-amino-acid chain: Phosphoglucosamine mutase (445 aa).

Ser-102 functions as the Phosphoserine intermediate in the catalytic mechanism. Mg(2+) is bound by residues Ser-102, Asp-240, Asp-242, and Asp-244. Ser-102 bears the Phosphoserine mark.

It belongs to the phosphohexose mutase family. Mg(2+) serves as cofactor. Post-translationally, activated by phosphorylation.

The enzyme catalyses alpha-D-glucosamine 1-phosphate = D-glucosamine 6-phosphate. Functionally, catalyzes the conversion of glucosamine-6-phosphate to glucosamine-1-phosphate. In Mycobacterium marinum (strain ATCC BAA-535 / M), this protein is Phosphoglucosamine mutase.